Consider the following 193-residue polypeptide: RNA polymerase sigma-H factor (193 aa).

The Polymerase core binding motif lies at 49 to 62 (DVAQEAFIKAYRAL). The segment at residues 157–176 (YEDIATVMQCPVGTVRSRIF) is a DNA-binding region (H-T-H motif).

This sequence belongs to the sigma-70 factor family. ECF subfamily.

Its function is as follows. Sigma factors are initiation factors that promote the attachment of RNA polymerase to specific initiation sites and are then released. This sigma factor regulates genes such as algD, involved in alginate biosynthesis. This is RNA polymerase sigma-H factor (algU) from Pseudomonas aeruginosa (strain ATCC 15692 / DSM 22644 / CIP 104116 / JCM 14847 / LMG 12228 / 1C / PRS 101 / PAO1).